Reading from the N-terminus, the 154-residue chain is MTKRGIQAFAGGIILATAVLAAVFYLTDEDQAAAVKDNKTVTEQDVNNYLDSKKLVSVNRDEYQKLLDSKEKSLNNDSGSDTKSDKVKTYKLTIKDGMSTADVSAILEKEGIISSAQDFNDYVIDAGYHKEIRAGEFKVKSDMSFKKIVKTLTR.

An N-terminal signal peptide occupies residues 1-33; that stretch reads MTKRGIQAFAGGIILATAVLAAVFYLTDEDQAA.

This is an uncharacterized protein from Bacillus subtilis (strain 168).